The primary structure comprises 564 residues: MRIIYLISTVLLIYTNATVLRTKESIQNKVTYDKYGFQPLCISCTGLISVASFFLKFDVSEPVILEFATIVCKLFAKQPWAVCDGISSQFRDEFFYVFRRLANESPSQICGIILPDCADPTDPSESGWMVALPPKPKRTRISKKKVQKKPNMSMSQNLNVLQLTDLHVDFEYKYPSEANCDDPVCCRVSVSEPKKAAGYWGSVGKCDIPFWTVENMLSHINKTHMIDMVIMTGDYINHVDWEYSIEEHLSVLRKLHRLVQNTFPSTPIYWALGNHEGVPVNSFAPHSVDERFWPTWLYKEFQTMSGPWLSEGAKDSLLKRGSYSTQVMDGLKLITLNTGFCEVTNFFLYLNQSDPDSSMSWFVKELFESEKKGEQVYVLAHIPPGDSECLEGWAFNYYRVIQRFSSTIAAQFFGHDHLDYFTVFYEDMHNVSSKPISVGYASPSVTTFEYQNPAYRIYEIDPYNKFKIVDFTTYYADLEKATEDKKPVWEKLYSARQAHGMDDLSPLSWNKVIQKLFTSEKKREKFYQYAFRNFSPQCDSTCQMQLMCNLRMGHHNSTLYCPTF.

A signal peptide spans 1-17 (MRIIYLISTVLLIYTNA). A Saposin B-type domain is found at 37-121 (FQPLCISCTG…IILPDCADPT (85 aa)). 3 disulfide bridges follow: cysteine 41/cysteine 117, cysteine 44/cysteine 110, and cysteine 72/cysteine 83. N-linked (GlcNAc...) asparagine glycosylation occurs at asparagine 151. Aspartate 165 and histidine 167 together coordinate Zn(2+). Cystine bridges form between cysteine 180–cysteine 185 and cysteine 186–cysteine 206. An N-linked (GlcNAc...) asparagine glycan is attached at asparagine 221. Zn(2+) contacts are provided by aspartate 234 and asparagine 274. Cysteine 341 and cysteine 389 are joined by a disulfide. Asparagine 351 carries N-linked (GlcNAc...) asparagine glycosylation. Zn(2+) contacts are provided by histidine 381, histidine 415, and histidine 417. The N-linked (GlcNAc...) asparagine glycan is linked to asparagine 430. Intrachain disulfides connect cysteine 538–cysteine 542 and cysteine 548–cysteine 561. An N-linked (GlcNAc...) asparagine glycan is attached at asparagine 556.

Belongs to the acid sphingomyelinase family. Requires Zn(2+) as cofactor.

It is found in the secreted. It catalyses the reaction a sphingomyelin + H2O = phosphocholine + an N-acylsphing-4-enine + H(+). The catalysed reaction is an N-acyl-15-methylhexadecasphing-4-enine-1-phosphocholine + H2O = an N-acyl-15-methylhexadecasphing-4-enine + phosphocholine + H(+). The protein operates within lipid metabolism; sphingolipid metabolism. Functionally, sphingomyelin phosphodiesterase (sphingomyelinase) that converts sphingomyelin to ceramide (N-acyl-sphingoid base) and phosphocholine at acidic pH. Displays its enzymatic activity when secreted. May play distinct roles in signaling. This Caenorhabditis elegans protein is Sphingomyelin phosphodiesterase 1 (asm-1).